Consider the following 1253-residue polypeptide: Elongator complex protein 1 (1253 aa).

Positions 830–1253 are mediates dimerization; that stretch reads VDVNMLFDHA…KPFEKLSILI (424 aa). Positions 1126–1141 are enriched in polar residues; the sequence is YTKSSNSSKMTRNTSK. Residues 1126–1153 form a disordered region; sequence YTKSSNSSKMTRNTSKNNRRLERKRARG. The tract at residues 1137-1155 is required for binding to tRNA; the sequence is RNTSKNNRRLERKRARGKK. Positions 1142–1153 are enriched in basic residues; it reads NNRRLERKRARG.

It belongs to the ELP1/IKA1 family. Homodimer. Component of the elongator complex.

The protein resides in the cytoplasm. Its pathway is tRNA modification; 5-methoxycarbonylmethyl-2-thiouridine-tRNA biosynthesis. Its function is as follows. Component of the elongator complex, a multiprotein complex which is required for multiple tRNA modifications, including mcm5U (5-methoxycarbonylmethyl uridine), mcm5s2U (5-methoxycarbonylmethyl-2-thiouridine), and ncm5U (5-carbamoylmethyl uridine). The elongator complex catalyzes formation of carboxymethyluridine in the wobble base at position 34 in tRNAs. ELP1 binds to tRNA, mediating interaction of the elongator complex with tRNA. This chain is Elongator complex protein 1, found in Schizosaccharomyces pombe (strain 972 / ATCC 24843) (Fission yeast).